A 483-amino-acid chain; its full sequence is Septin-8 (483 aa).

The segment covering 1 to 16 (MAATDLERFSNAEPEP) has biased composition (basic and acidic residues). Residues 1-22 (MAATDLERFSNAEPEPRSLSLG) form a disordered region. The residue at position 2 (Ala-2) is an N-acetylalanine. Ser-10 is subject to Phosphoserine. One can recognise a Septin-type G domain in the interval 41-307 (QGFSFNILCV…ELYRRCKLEE (267 aa)). Positions 51 to 58 (GETGIGKS) are G1 motif. GTP-binding positions include 51–58 (GETGIGKS), Gly-106, 187–195 (KADTISKSE), Gly-241, and Arg-256. Residues 103-106 (DAVG) are G3 motif. Residues 186–189 (AKAD) are G4 motif. Residues 320–413 (FSLQETYEAK…AVEALQSQAL (94 aa)) are a coiled coil. Polar residues predominate over residues 411–420 (QALHATSQQP). Residues 411 to 443 (QALHATSQQPLRKDKDKKNRSDIGAHQPGMSLS) form a disordered region. A compositionally biased stretch (basic and acidic residues) spans 421 to 433 (LRKDKDKKNRSDI).

The protein belongs to the TRAFAC class TrmE-Era-EngA-EngB-Septin-like GTPase superfamily. Septin GTPase family. In terms of assembly, septins polymerize into heterooligomeric protein complexes that form filaments, and can associate with cellular membranes, actin filaments and microtubules. GTPase activity is required for filament formation. Interacts with CDK14. Interacts with SEPTIN5. Interacts with SEPTIN7. Interacts with SEPTIN4. Interacts with VAMP2; the interaction inhibits interaction of VAMP2 with SYP. Interacts with STX1A. As to expression, widely expressed, including in brain, heart and platelets; most abundant in aorta. Isoform 2 is expressed at low levels in specific brain areas, such as occipital pole, frontal lobe, temporal lobe and putamen. Isoform 1 and 3 are highly expressed in specific brain areas, such as occipital pole, frontal lobe, temporal lobe and putamen. Isoform 2 is highly expressed in prostate, testis and ovary. Isoform 1 and isoform 3 are expressed at low levels in prostate, testis and ovary.

It is found in the cytoplasm. The protein localises to the cytoskeleton. The protein resides in the synapse. Its subcellular location is the cell projection. It localises to the axon. It is found in the cytoplasmic vesicle. The protein localises to the secretory vesicle. The protein resides in the synaptic vesicle membrane. Its subcellular location is the presynapse. Functionally, filament-forming cytoskeletal GTPase. May play a role in platelet secretion. Seems to participate in the process of SNARE complex formation in synaptic vesicles. In terms of biological role, stabilizes BACE1 protein levels and promotes the sorting and accumulation of BACE1 to the recycling or endosomal compartments, modulating the beta-amyloidogenic processing of APP. This Homo sapiens (Human) protein is Septin-8.